We begin with the raw amino-acid sequence, 87 residues long: Small ribosomal subunit protein bS18 (87 aa).

A compositionally biased stretch (basic residues) spans 1–19 (MSTRSRARKRSRVRSRTRR). The interval 1 to 25 (MSTRSRARKRSRVRSRTRRKDPIFV) is disordered.

The protein belongs to the bacterial ribosomal protein bS18 family. In terms of assembly, part of the 30S ribosomal subunit. Forms a tight heterodimer with protein bS6.

Its function is as follows. Binds as a heterodimer with protein bS6 to the central domain of the 16S rRNA, where it helps stabilize the platform of the 30S subunit. The chain is Small ribosomal subunit protein bS18 from Rhodopirellula baltica (strain DSM 10527 / NCIMB 13988 / SH1).